Reading from the N-terminus, the 135-residue chain is Dihydromethanopterin reductase (135 aa).

NADP(+) contacts are provided by residues Ala9, 16–21, 52–54, and 93–97; these read LGLNGH, PKT, and GGIAV.

In terms of assembly, homodimer.

It carries out the reaction 5,6,7,8-tetrahydromethanopterin + NAD(+) = 7,8-dihydromethanopterin + NADH + H(+). The enzyme catalyses 5,6,7,8-tetrahydromethanopterin + NADP(+) = 7,8-dihydromethanopterin + NADPH + H(+). Its pathway is cofactor biosynthesis; 5,6,7,8-tetrahydromethanopterin biosynthesis. Its function is as follows. Catalyzes the reduction of dihydromethanopterin (H(2)MPT) to tetrahydromethanopterin (H(4)MPT). Shows preference for NADPH rather than NADH as electron donor. Does not reduce dihydrofolate. In Methylorubrum extorquens (strain ATCC 14718 / DSM 1338 / JCM 2805 / NCIMB 9133 / AM1) (Methylobacterium extorquens), this protein is Dihydromethanopterin reductase (dmrA).